A 104-amino-acid chain; its full sequence is Replication restart protein PriB (104 aa).

One can recognise an SSB domain in the interval 1-101 (MTNRLTLSGT…LHAEQIELID (101 aa)).

The protein belongs to the PriB family. Homodimer. Interacts with PriA and DnaT. Component of the replication restart primosome. Primosome assembly occurs via a 'hand-off' mechanism. PriA binds to replication forks, subsequently PriB then DnaT bind; DnaT then displaces ssDNA to generate the helicase loading substrate.

Involved in the restart of stalled replication forks, which reloads the replicative helicase on sites other than the origin of replication; the PriA-PriB pathway is the major replication restart pathway. During primosome assembly it facilitates complex formation between PriA and DnaT on DNA; stabilizes PriA on DNA. Stimulates the DNA unwinding activity of PriA helicase. The sequence is that of Replication restart protein PriB from Salmonella typhi.